A 132-amino-acid chain; its full sequence is uncharacterized protein (132 aa).

Transmembrane regions (helical) follow at residues 44–64 and 75–95; these read FMSFISFIVSCRLFILVFTFI and IAMIDAVVNALLILIVLAMLF.

The protein resides in the cytoplasm. It is found in the membrane. This is an uncharacterized protein from Schizosaccharomyces pombe (strain 972 / ATCC 24843) (Fission yeast).